Consider the following 322-residue polypeptide: Apolipoprotein E (322 aa).

The first 18 residues, 1-18 (MKVLWAALLVAFLAGCQG), serve as a signal peptide directing secretion. A run of 8 repeats spans residues 84-105 (ALMD…EQLS), 106-127 (PVAE…ARLG), 128-149 (ADME…AMLG), 150-171 (QSXD…KRLL), 172-193 (RDVD…EGAE), 194-215 (RGVS…ARAA), 216-238 (TVGS…ERLR), and 239-260 (ARME…EQVE). The interval 84–260 (ALMDETMKEL…RLDEVKEQVE (177 aa)) is 8 X 22 AA approximate tandem repeats. At Met147 the chain carries Methionine sulfoxide. Position 151 is a phosphoserine (Ser151). Residues 162 to 172 (HLRKLRKRLLR) are LDL and other lipoprotein receptors binding. Position 166–169 (166–169 (LRKR)) interacts with heparin. A lipid-binding and lipoprotein association region spans residues 214–295 (AATVGSSLAG…SWFEPLVEDM (82 aa)). The O-linked (GalNAc...) threonine glycan is linked to Thr216. Residue 234–241 (GERLRARM) coordinates heparin. The interval 271–322 (QQMRLQAEAFQARLKSWFEPLVEDMQRQWAGLVEKVQAAVGASAAPVPGDNH) is homooligomerization. Residues 283-295 (RLKSWFEPLVEDM) are specificity for association with VLDL.

It belongs to the apolipoprotein A1/A4/E family. In terms of assembly, homotetramer. May interact with ABCA1; functionally associated with ABCA1 in the biogenesis of HDLs. May interact with APP/A4 amyloid-beta peptide; the interaction is extremely stable in vitro but its physiological significance is unclear. May interact with MAPT. May interact with MAP2. In the cerebrospinal fluid, interacts with secreted SORL1. Interacts with PMEL; this allows the loading of PMEL luminal fragment on ILVs to induce fibril nucleation. APOE exists as multiple glycosylated and sialylated glycoforms within cells and in plasma. The extent of glycosylation and sialylation are tissue and context specific. In terms of processing, glycated in plasma VLDL. Post-translationally, phosphorylated by FAM20C in the extracellular medium.

The protein localises to the secreted. The protein resides in the extracellular space. It localises to the extracellular matrix. Its subcellular location is the extracellular vesicle. It is found in the endosome. The protein localises to the multivesicular body. APOE is an apolipoprotein, a protein associating with lipid particles, that mainly functions in lipoprotein-mediated lipid transport between organs via the plasma and interstitial fluids. APOE is a core component of plasma lipoproteins and is involved in their production, conversion and clearance. Apolipoproteins are amphipathic molecules that interact both with lipids of the lipoprotein particle core and the aqueous environment of the plasma. As such, APOE associates with chylomicrons, chylomicron remnants, very low density lipoproteins (VLDL) and intermediate density lipoproteins (IDL) but shows a preferential binding to high-density lipoproteins (HDL). It also binds a wide range of cellular receptors including the LDL receptor/LDLR, the LDL receptor-related proteins LRP1, LRP2 and LRP8 and the very low-density lipoprotein receptor/VLDLR that mediate the cellular uptake of the APOE-containing lipoprotein particles. Finally, APOE also has a heparin-binding activity and binds heparan-sulfate proteoglycans on the surface of cells, a property that supports the capture and the receptor-mediated uptake of APOE-containing lipoproteins by cells. A main function of APOE is to mediate lipoprotein clearance through the uptake of chylomicrons, VLDLs, and HDLs by hepatocytes. APOE is also involved in the biosynthesis by the liver of VLDLs as well as their uptake by peripheral tissues ensuring the delivery of triglycerides and energy storage in muscle, heart and adipose tissues. By participating in the lipoprotein-mediated distribution of lipids among tissues, APOE plays a critical role in plasma and tissues lipid homeostasis. APOE is also involved in two steps of reverse cholesterol transport, the HDLs-mediated transport of cholesterol from peripheral tissues to the liver, and thereby plays an important role in cholesterol homeostasis. First, it is functionally associated with ABCA1 in the biogenesis of HDLs in tissues. Second, it is enriched in circulating HDLs and mediates their uptake by hepatocytes. APOE also plays an important role in lipid transport in the central nervous system, regulating neuron survival and sprouting. This chain is Apolipoprotein E (APOE), found in Ateles geoffroyi (Black-handed spider monkey).